A 53-amino-acid chain; its full sequence is Small, acid-soluble spore protein K (53 aa).

Residues 1-53 (MRNKERNFPNQNNNKFEGEPRAKAEYASKRANGTTNTHPQERMHASGKRDDNF) are disordered. 2 stretches are compositionally biased toward basic and acidic residues: residues 16 to 28 (FEGE…EYAS) and 39 to 53 (PQER…DDNF).

Belongs to the SspK family.

The protein resides in the spore core. This Geobacillus sp. (strain WCH70) protein is Small, acid-soluble spore protein K.